A 637-amino-acid chain; its full sequence is Threonine--tRNA ligase (637 aa).

In terms of domain architecture, TGS spans 1–61 (MIKITLKDGK…NEDSTLEILT (61 aa)). Residues 242 to 532 (DHRKLGKELG…LTEHYAGAFP (291 aa)) are catalytic. Zn(2+)-binding residues include C333, H384, and H509.

This sequence belongs to the class-II aminoacyl-tRNA synthetase family. Homodimer. Zn(2+) serves as cofactor.

Its subcellular location is the cytoplasm. The enzyme catalyses tRNA(Thr) + L-threonine + ATP = L-threonyl-tRNA(Thr) + AMP + diphosphate + H(+). Its function is as follows. Catalyzes the attachment of threonine to tRNA(Thr) in a two-step reaction: L-threonine is first activated by ATP to form Thr-AMP and then transferred to the acceptor end of tRNA(Thr). Also edits incorrectly charged L-seryl-tRNA(Thr). This Clostridium novyi (strain NT) protein is Threonine--tRNA ligase.